Consider the following 125-residue polypeptide: PCNA-associated factor (125 aa).

A disordered region spans residues 1–125 (MVRTKADSAG…SEEAADSDDE (125 aa)). The segment covering 8 to 17 (SAGSSASSGS) has biased composition (low complexity). A D-box motif is present at residues 28 to 39 (RKTFGSSSSGSN). The short motif at 68 to 79 (QKGIGEFFGSPS) is the PIP-box element. The KEN box signature appears at 85–87 (KEN). Positions 95 to 107 (EAGGSGAGKAPRK) match the Initiation motif motif. The span at 115–125 (PSEEAADSDDE) shows a compositional bias: acidic residues.

As to quaternary structure, interacts with pcna.

The protein localises to the nucleus. Its subcellular location is the cytoplasm. It localises to the perinuclear region. Its function is as follows. PCNA-binding protein that acts as a regulator of DNA repair during DNA replication. Following DNA damage, the interaction with pcna is disrupted, facilitating the interaction between monoubiquitinated pcna and the translesion DNA synthesis DNA polymerase eta (polh) at stalled replisomes, facilitating the bypass of replication-fork-blocking lesions. Also acts as a regulator of centrosome number. The polypeptide is PCNA-associated factor (Xenopus tropicalis (Western clawed frog)).